We begin with the raw amino-acid sequence, 208 residues long: Ribosomal RNA small subunit methyltransferase G (208 aa).

Residues glycine 76, leucine 81, 127–128, and arginine 142 contribute to the S-adenosyl-L-methionine site; that span reads VE.

It belongs to the methyltransferase superfamily. RNA methyltransferase RsmG family.

It localises to the cytoplasm. It catalyses the reaction guanosine(527) in 16S rRNA + S-adenosyl-L-methionine = N(7)-methylguanosine(527) in 16S rRNA + S-adenosyl-L-homocysteine. Specifically methylates the N7 position of guanine in position 527 of 16S rRNA. The polypeptide is Ribosomal RNA small subunit methyltransferase G (Legionella pneumophila (strain Corby)).